Consider the following 249-residue polypeptide: Segregation and condensation protein A (249 aa).

Belongs to the ScpA family. As to quaternary structure, component of a cohesin-like complex composed of ScpA, ScpB and the Smc homodimer, in which ScpA and ScpB bind to the head domain of Smc. The presence of the three proteins is required for the association of the complex with DNA.

It is found in the cytoplasm. Its function is as follows. Participates in chromosomal partition during cell division. May act via the formation of a condensin-like complex containing Smc and ScpB that pull DNA away from mid-cell into both cell halves. This is Segregation and condensation protein A from Mycoplasmopsis pulmonis (strain UAB CTIP) (Mycoplasma pulmonis).